A 124-amino-acid polypeptide reads, in one-letter code: uncharacterized protein (124 aa).

A compositionally biased stretch (basic residues) spans K62–H72. Residues K62 to S86 are disordered. Basic and acidic residues predominate over residues H73–V83. Positions E80–E112 form a coiled coil.

This is an uncharacterized protein from Dictyostelium discoideum (Social amoeba).